An 833-amino-acid chain; its full sequence is Neuronal tyrosine-phosphorylated phosphoinositide-3-kinase adapter 1 (833 aa).

5 disordered regions span residues 1 to 45 (MNLL…PGVR), 64 to 191 (PASQ…LQRL), 219 to 423 (VFRG…RELP), 645 to 674 (EEDG…PSGI), and 736 to 765 (HTPR…QPAR). Basic and acidic residues predominate over residues 8–25 (TKLEWRQHKEEEAKRSSS). The involved in CYFIP1- and NCKAP1-binding stretch occupies residues 76–181 (STMAPRSLSC…DESCAPAPSP (106 aa)). Residues 111–120 (PPAKPRRHPS) are compositionally biased toward basic residues. The span at 162–171 (SPNTQLSVSF) shows a compositional bias: polar residues. Positions 220 to 239 (FRGGGRSGGGLAGPPLGSGG) are enriched in gly residues. Residues 248–257 (SDSEDSEAIY) are compositionally biased toward acidic residues. Residues 275–285 (GPPPLTAPSPP) show a composition bias toward pro residues.

The protein belongs to the NYAP family. Interacts with ACOT9, ARHGAP26 and PIK3R2. Interacts with components of the WAVE1 complex, CYFIP1 and NCKAP1; this interaction mediates PI3K-WAVE1 association and actin cytoskeleton remodeling. Post-translationally, phosphorylated on tyrosine residues by FYN upon stimulation with CNTN5. Phosphorylation begins at 14 dpc, reaches a peak during perinatal days in brain, then gradually decreases. As to expression, expressed predominantly in brain where it is present in the neurons, but not in astrocytes or oligodendrites.

Activates PI3K and concomitantly recruits the WAVE1 complex to the close vicinity of PI3K and regulates neuronal morphogenesis. This Mus musculus (Mouse) protein is Neuronal tyrosine-phosphorylated phosphoinositide-3-kinase adapter 1 (Nyap1).